The primary structure comprises 311 residues: Pyrimidine-specific ribonucleoside hydrolase RihA (311 aa).

Histidine 240 is an active-site residue.

This sequence belongs to the IUNH family. RihA subfamily.

Hydrolyzes cytidine or uridine to ribose and cytosine or uracil, respectively. In Salmonella dublin (strain CT_02021853), this protein is Pyrimidine-specific ribonucleoside hydrolase RihA.